Here is a 418-residue protein sequence, read N- to C-terminus: Tyrosine--tRNA ligase (418 aa).

Tyr-34 contacts L-tyrosine. Residues 39 to 48 (PTADSLHLGH) carry the 'HIGH' region motif. L-tyrosine is bound by residues Tyr-169 and Gln-173. A 'KMSKS' region motif is present at residues 229–233 (KFGKS). Residue Lys-232 participates in ATP binding. The region spanning 352-418 (HNIVEILVAA…GKKKYAVLTY (67 aa)) is the S4 RNA-binding domain.

Belongs to the class-I aminoacyl-tRNA synthetase family. TyrS type 1 subfamily. Homodimer.

It is found in the cytoplasm. It catalyses the reaction tRNA(Tyr) + L-tyrosine + ATP = L-tyrosyl-tRNA(Tyr) + AMP + diphosphate + H(+). Its function is as follows. Catalyzes the attachment of tyrosine to tRNA(Tyr) in a two-step reaction: tyrosine is first activated by ATP to form Tyr-AMP and then transferred to the acceptor end of tRNA(Tyr). The chain is Tyrosine--tRNA ligase from Streptococcus pyogenes serotype M1.